The chain runs to 571 residues: Alpha-1D adrenergic receptor (571 aa).

Over methionine 1–glutamine 94 the chain is Extracellular. The disordered stretch occupies residues glycine 13 to glycine 75. Gly residues predominate over residues serine 19–glycine 34. Residues alanine 35–proline 47 show a composition bias toward low complexity. The segment covering glycine 48–glycine 57 has biased composition (gly residues). N-linked (GlcNAc...) asparagine glycosylation is found at asparagine 64 and asparagine 81. A helical transmembrane segment spans residues glycine 95–valine 120. Residues alanine 121–tyrosine 132 lie on the Cytoplasmic side of the membrane. Residues phenylalanine 133 to leucine 158 traverse the membrane as a helical segment. Residues glycine 159–cysteine 168 lie on the Extracellular side of the membrane. Residues aspartate 169 to valine 191 form a helical membrane-spanning segment. Over aspartate 192–alanine 212 the chain is Cytoplasmic. A helical transmembrane segment spans residues alanine 213–proline 237. Residues valine 238–glutamate 250 lie on the Extracellular side of the membrane. Residues alanine 251–cysteine 274 form a helical membrane-spanning segment. Residues arginine 275–lysine 348 lie on the Cytoplasmic side of the membrane. Residues threonine 349–leucine 373 traverse the membrane as a helical segment. The Extracellular portion of the chain corresponds to phenylalanine 374–serine 380. A helical transmembrane segment spans residues glutamate 381–serine 405. The Cytoplasmic portion of the chain corresponds to serine 406–isoleucine 571. The S-palmitoyl cysteine moiety is linked to residue cysteine 419. Positions leucine 465–arginine 487 are disordered.

The protein belongs to the G-protein coupled receptor 1 family. Adrenergic receptor subfamily. ADRA1D sub-subfamily. As to quaternary structure, interacts with FLNA (via filamin repeat 21); increases PKA-mediated phosphorylation of FLNA. In terms of processing, palmitoylated. Palmitoylation by ZDHHC21 may increase the expression of the receptor and regulate downstream signaling.

Its subcellular location is the cell membrane. Its function is as follows. This alpha-adrenergic receptor mediates its effect through the influx of extracellular calcium. The polypeptide is Alpha-1D adrenergic receptor (ADRA1D) (Sus scrofa (Pig)).